The primary structure comprises 1023 residues: RTX-I toxin determinant A from serotypes 5/10 (1023 aa).

3 helical membrane passes run 226–256, 297–326, and 367–406; these read NNLP…ILSN, STTA…ADKF, and INSV…SGIL. Hemolysin-type calcium-binding repeat units lie at residues 730-747, 748-765, 766-783, 784-801, 812-829, and 830-847; these read FGSR…DDEI, YGND…NDVI, HGGD…NDRL, IGGK…DDEL, LGGA…TNLF, and DGGV…KDIY.

Belongs to the RTX prokaryotic toxin (TC 1.C.11) family. Post-translationally, palmitoylated by ApxIC. The toxin only becomes active when modified.

Its subcellular location is the secreted. It is found in the host cell membrane. Functionally, one of the virulence factors of A.pleuropneumoniae, which has a strong hemolytic activity and is cytotoxic for alveolar macrophages and neutrophils. In Actinobacillus pleuropneumoniae (Haemophilus pleuropneumoniae), this protein is RTX-I toxin determinant A from serotypes 5/10 (apxIA).